The following is a 104-amino-acid chain: N(4)-acetylcytidine amidohydrolase (104 aa).

Residues 7-104 (TFFTRFEQDI…FWVIAFELVD (98 aa)) form the ASCH domain. Catalysis depends on Lys21, which acts as the Proton acceptor. The Nucleophile role is filled by Thr24. Glu74 (proton donor) is an active-site residue.

Belongs to the N(4)-acetylcytidine amidohydrolase family.

The enzyme catalyses N(4)-acetylcytidine + H2O = cytidine + acetate + H(+). The catalysed reaction is N(4)-acetyl-2'-deoxycytidine + H2O = 2'-deoxycytidine + acetate + H(+). It catalyses the reaction N(4)-acetylcytosine + H2O = cytosine + acetate + H(+). Its function is as follows. Catalyzes the hydrolysis of N(4)-acetylcytidine (ac4C). The chain is N(4)-acetylcytidine amidohydrolase from Pasteurella multocida (strain Pm70).